A 349-amino-acid polypeptide reads, in one-letter code: tRNA pseudouridine synthase D (349 aa).

Residue phenylalanine 27 coordinates substrate. The active-site Nucleophile is aspartate 80. A substrate-binding site is contributed by asparagine 129. Residues 155–303 (GVPNYFGAQR…VEAARRAMLL (149 aa)) enclose the TRUD domain. Residue phenylalanine 329 coordinates substrate.

It belongs to the pseudouridine synthase TruD family.

It carries out the reaction uridine(13) in tRNA = pseudouridine(13) in tRNA. Functionally, responsible for synthesis of pseudouridine from uracil-13 in transfer RNAs. The protein is tRNA pseudouridine synthase D of Escherichia coli (strain K12 / MC4100 / BW2952).